Here is a 263-residue protein sequence, read N- to C-terminus: Trans-aconitate 2-methyltransferase (263 aa).

This sequence belongs to the methyltransferase superfamily. Tam family.

It localises to the cytoplasm. It carries out the reaction trans-aconitate + S-adenosyl-L-methionine = (E)-3-(methoxycarbonyl)pent-2-enedioate + S-adenosyl-L-homocysteine. Its function is as follows. Catalyzes the S-adenosylmethionine monomethyl esterification of trans-aconitate. In Mycobacterium ulcerans (strain Agy99), this protein is Trans-aconitate 2-methyltransferase.